Consider the following 437-residue polypeptide: Regulator of phospholipase D SRF1 (437 aa).

Residues 1–24 (MGDSNSSQEAYSDTTSTNASRIAD) form a disordered region. Topologically, residues 1 to 267 (MGDSNSSQEA…LTSLLLDNQY (267 aa)) are cytoplasmic. Phosphoserine is present on residues Ser45 and Ser167. The chain crosses the membrane as a helical span at residues 268–288 (LILGLRIFTGILSCISLALAI). Topologically, residues 289–308 (KIFQNSRSNNTISESKIGQQ) are extracellular. The N-linked (GlcNAc...) asparagine glycan is linked to Asn297. A helical transmembrane segment spans residues 309-329 (PSTIMAICVNAVAIAYIIYIA). At 330–348 (HDEFAGKPVGLRNPLSKLK) the chain is on the cytoplasmic side. A helical transmembrane segment spans residues 349–369 (LILLDLLFIIFSSANLALAFN). The Extracellular segment spans residues 370 to 403 (TRFDKEWVCTSIRRSNGSTYGYPKIPRICRKQEA). N-linked (GlcNAc...) asparagine glycosylation occurs at Asn385. A helical membrane pass occupies residues 404-424 (LSAFLFVALFMWVITFSISIV). At 425 to 437 (RVVEKVSSITNRN) the chain is on the cytoplasmic side.

In terms of assembly, interacts with SPO14.

The protein resides in the membrane. Regulator of phospholipase D (SPO14) which is required for SPO14 catalytic activity in mitotic cells. Essential to buffer the toxic effects of C16:0 platelet activating factor. The chain is Regulator of phospholipase D SRF1 (SRF1) from Saccharomyces cerevisiae (strain ATCC 204508 / S288c) (Baker's yeast).